The following is a 78-amino-acid chain: UPF0369 protein RP167 (78 aa).

It belongs to the SDHAF4 family.

The polypeptide is UPF0369 protein RP167 (Rickettsia prowazekii (strain Madrid E)).